The chain runs to 164 residues: Phosphopantetheine adenylyltransferase (164 aa).

S9 serves as a coordination point for substrate. Residues 9 to 10 (SF) and H17 each bind ATP. The substrate site is built by K41, L74, and R88. Residues 89–91 (GIR), E99, and 124–130 (YAEVSST) each bind ATP.

It belongs to the bacterial CoaD family. In terms of assembly, homohexamer. Mg(2+) is required as a cofactor.

It localises to the cytoplasm. It carries out the reaction (R)-4'-phosphopantetheine + ATP + H(+) = 3'-dephospho-CoA + diphosphate. The protein operates within cofactor biosynthesis; coenzyme A biosynthesis; CoA from (R)-pantothenate: step 4/5. Its function is as follows. Reversibly transfers an adenylyl group from ATP to 4'-phosphopantetheine, yielding dephospho-CoA (dPCoA) and pyrophosphate. The polypeptide is Phosphopantetheine adenylyltransferase (Chromobacterium violaceum (strain ATCC 12472 / DSM 30191 / JCM 1249 / CCUG 213 / NBRC 12614 / NCIMB 9131 / NCTC 9757 / MK)).